The primary structure comprises 600 residues: Glutamine--fructose-6-phosphate aminotransferase [isomerizing] (600 aa).

Cys2 (nucleophile; for GATase activity) is an active-site residue. The 216-residue stretch at 2–217 (CGIVGYIGQL…DKEMVIVTDD (216 aa)) folds into the Glutamine amidotransferase type-2 domain. 2 SIS domains span residues 283-422 (IAAA…KNGI) and 452-590 (IARE…VDKP). Catalysis depends on Lys595, which acts as the For Fru-6P isomerization activity.

As to quaternary structure, homodimer.

The protein localises to the cytoplasm. It carries out the reaction D-fructose 6-phosphate + L-glutamine = D-glucosamine 6-phosphate + L-glutamate. In terms of biological role, catalyzes the first step in hexosamine metabolism, converting fructose-6P into glucosamine-6P using glutamine as a nitrogen source. The sequence is that of Glutamine--fructose-6-phosphate aminotransferase [isomerizing] from Bacillus subtilis (strain 168).